The sequence spans 163 residues: Phosphopantetheine adenylyltransferase (163 aa).

Thr11 is a substrate binding site. Residues Thr11–Phe12 and His19 each bind ATP. Positions 43, 75, and 89 each coordinate substrate. Residues Gly90 to Arg92, Glu100, and Tyr125 to Thr131 contribute to the ATP site.

It belongs to the bacterial CoaD family. Homohexamer. Mg(2+) serves as cofactor.

Its subcellular location is the cytoplasm. It carries out the reaction (R)-4'-phosphopantetheine + ATP + H(+) = 3'-dephospho-CoA + diphosphate. The protein operates within cofactor biosynthesis; coenzyme A biosynthesis; CoA from (R)-pantothenate: step 4/5. Its function is as follows. Reversibly transfers an adenylyl group from ATP to 4'-phosphopantetheine, yielding dephospho-CoA (dPCoA) and pyrophosphate. The polypeptide is Phosphopantetheine adenylyltransferase (Acinetobacter baylyi (strain ATCC 33305 / BD413 / ADP1)).